Consider the following 951-residue polypeptide: Pentatricopeptide repeat-containing protein At4g19220, mitochondrial (951 aa).

Residues 1-63 (MLLVMVRSST…RHFTSSVLSP (63 aa)) constitute a mitochondrion transit peptide. 22 PPR repeats span residues 121–151 (DLATSSKLLTFYGRTGELVSSSCLFDELKEK), 152–186 (DVIVWNSMITALNQNGRYIAAVGLFIEMIHKGNEF), 187–221 (DSTTLLLAASALSSLHLSRKCSMLHCLAIETGLVG), 222–252 (DSSLCNALMNLYAKGENLSSAECVFTHMEHR), 253–287 (DIVSWNTIMTKCLANGHPRKSLQYFKSMTGSGQEA), 288–322 (DTVTFSCVISACSSIEELTLGESLHGLVIKSGYSP), 325–355 (HVSVGNSIISMYSKCGDTEAAETVFEELVCR), 356–386 (DVISSNAILNGFAANGMFEEAFGILNQMQSV), 392–426 (DIATVVSITSICGDLSFSREGRAVHGYTVRMEMQS), 428–458 (ALEVINSVIDMYGKCGLTTQAELLFKTTTHR), 459–489 (DLVSWNSMISAFSQNGFTHKAKNLFKEVVSE), 496–530 (SLSTVLAILTSCDSSDSLIFGKSVHCWLQKLGFGD), 531–561 (NMLSANSVINMYIGCRDLTSAFLRLETMSET), 563–597 (DLTSWNSVISGCASSGHHLESLRAFQAMSREGKIR), 599–629 (DLITLLGTISASGNLGLVLQGRCFHGLAIKS), 634–668 (DTQLQNTLITMYGRCKDIESAVKVFGLISDPNLCS), 669–695 (WNCVISALSQNKAGREVFQLFRNLKLE), 697–731 (NEITFVGLLSASTQLGSTSYGMQAHCHLIRRGFQA), 732–762 (NPFVSAALVDMYSSCGMLETGMKVFRNSGVN), 763–793 (SISAWNSVISAHGFHGMGEKAMELFKELSSN), 799–829 (NKSSFISLLSACSHSGFIDEGLSYYKQMEEK), and 835–865 (VTEHRVWIVDMLGRAGKLREAYEFITGIGEP). The tract at residues 870–945 (VWGALLSACN…LPGYSVIDVR (76 aa)) is type E motif.

This sequence belongs to the PPR family. PCMP-E subfamily.

The protein resides in the mitochondrion. This is Pentatricopeptide repeat-containing protein At4g19220, mitochondrial (PCMP-E2) from Arabidopsis thaliana (Mouse-ear cress).